The chain runs to 264 residues: 3-methyl-2-oxobutanoate hydroxymethyltransferase (264 aa).

Positions 45 and 84 each coordinate Mg(2+). 3-methyl-2-oxobutanoate is bound by residues 45-46, D84, and K113; that span reads DS. E115 is a binding site for Mg(2+). E182 serves as the catalytic Proton acceptor.

It belongs to the PanB family. Homodecamer; pentamer of dimers. Mg(2+) serves as cofactor.

The protein localises to the cytoplasm. The enzyme catalyses 3-methyl-2-oxobutanoate + (6R)-5,10-methylene-5,6,7,8-tetrahydrofolate + H2O = 2-dehydropantoate + (6S)-5,6,7,8-tetrahydrofolate. It participates in cofactor biosynthesis; (R)-pantothenate biosynthesis; (R)-pantoate from 3-methyl-2-oxobutanoate: step 1/2. Functionally, catalyzes the reversible reaction in which hydroxymethyl group from 5,10-methylenetetrahydrofolate is transferred onto alpha-ketoisovalerate to form ketopantoate. This Caldicellulosiruptor bescii (strain ATCC BAA-1888 / DSM 6725 / KCTC 15123 / Z-1320) (Anaerocellum thermophilum) protein is 3-methyl-2-oxobutanoate hydroxymethyltransferase.